The following is a 283-amino-acid chain: Elongation factor Ts (283 aa).

Residues 80-83 are involved in Mg(2+) ion dislocation from EF-Tu; sequence TDFV.

The protein belongs to the EF-Ts family.

The protein resides in the cytoplasm. In terms of biological role, associates with the EF-Tu.GDP complex and induces the exchange of GDP to GTP. It remains bound to the aminoacyl-tRNA.EF-Tu.GTP complex up to the GTP hydrolysis stage on the ribosome. This chain is Elongation factor Ts, found in Haemophilus influenzae (strain PittEE).